The primary structure comprises 190 residues: Orotate phosphoribosyltransferase (190 aa).

Residue 114 to 122 participates in 5-phospho-alpha-D-ribose 1-diphosphate binding; that stretch reads EDVVTTGGS. Orotate is bound by residues Thr118 and Arg146.

It belongs to the purine/pyrimidine phosphoribosyltransferase family. PyrE subfamily. Homodimer. It depends on Mg(2+) as a cofactor.

It carries out the reaction orotidine 5'-phosphate + diphosphate = orotate + 5-phospho-alpha-D-ribose 1-diphosphate. The protein operates within pyrimidine metabolism; UMP biosynthesis via de novo pathway; UMP from orotate: step 1/2. Catalyzes the transfer of a ribosyl phosphate group from 5-phosphoribose 1-diphosphate to orotate, leading to the formation of orotidine monophosphate (OMP). The polypeptide is Orotate phosphoribosyltransferase (Thermoanaerobacter sp. (strain X514)).